Reading from the N-terminus, the 249-residue chain is Triosephosphate isomerase (249 aa).

Asn10 and Lys12 together coordinate substrate. The Electrophile role is filled by His94. Glu166 serves as the catalytic Proton acceptor.

This sequence belongs to the triosephosphate isomerase family. Homodimer. The N-terminus is blocked.

It catalyses the reaction D-glyceraldehyde 3-phosphate = dihydroxyacetone phosphate. It functions in the pathway carbohydrate biosynthesis; gluconeogenesis. Its pathway is carbohydrate degradation; glycolysis; D-glyceraldehyde 3-phosphate from glycerone phosphate: step 1/1. In Paracoccidioides lutzii (strain ATCC MYA-826 / Pb01) (Paracoccidioides brasiliensis), this protein is Triosephosphate isomerase (TPI1).